The chain runs to 500 residues: Cytochrome P450 monooxygenase hepD (500 aa).

Residues 15 to 35 traverse the membrane as a helical segment; sequence WILLSLSLAFIVVYSLFYLAV. N99, N185, N373, and N409 each carry an N-linked (GlcNAc...) asparagine glycan. C445 provides a ligand contact to heme. N482 carries an N-linked (GlcNAc...) asparagine glycan.

It belongs to the cytochrome P450 family. The cofactor is heme.

It is found in the membrane. It participates in secondary metabolite biosynthesis. Its function is as follows. Cytochrome P450 monooxygenase; part of the gene cluster that mediates the biosynthesis of heptelidic acid (HA), a sesquiterpene lactone that acts as an inhibitor of glyceraldehyde-3-phosphatedehydrogenase (GAPDH) and a growth inhibitor of the salt-tolerant lactic acid bacteria in soy sauce brewing. The polypeptide is Cytochrome P450 monooxygenase hepD (Aspergillus oryzae (strain ATCC 42149 / RIB 40) (Yellow koji mold)).